Consider the following 96-residue polypeptide: Complement inhibitor RaCI4 (96 aa).

A signal peptide spans M1–S24. 3 disulfide bridges follow: C37-C61, C42-C63, and C57-C78.

This sequence belongs to the RaCI family. As to expression, expressed in salivary glands.

The protein localises to the secreted. In terms of biological role, complement inhibitor. Prevents complement-mediated C5 activation by binding to C5. Binds C5 at a different binding site than the other tick complement inhibitors OmCI and CirpT1, and the drug eculizumab. Inhibits complement in human and guinea pig but not in other species tested (rabbit, rat, mouse, and pig). The protein is Complement inhibitor RaCI4 of Hyalomma rufipes (Tick).